The following is a 318-amino-acid chain: Putative fimbrium tip subunit Fim1F (318 aa).

The N-terminal stretch at 1-24 (MRFNVVLFMLIVALLGGLSTCSSE) is a signal peptide. The propeptide occupies 25-50 (VPIGFDTDELSFDMSLVLLTGDMQTK).

Belongs to the bacteroidetes fimbrillin superfamily. FimA/Mfa1 family. As to quaternary structure, may be part of the fimbrial tip.

It is found in the fimbrium. Functionally, putative component of the fimbrium tip. Fimbriae are filamentous appendages on the cell surface that mediate cell adhesion and biofilm formation. The chain is Putative fimbrium tip subunit Fim1F from Parabacteroides distasonis (strain ATCC 8503 / DSM 20701 / CIP 104284 / JCM 5825 / NCTC 11152).